A 184-amino-acid polypeptide reads, in one-letter code: Casparian strip membrane protein 3 (184 aa).

The Cytoplasmic portion of the chain corresponds to 1–24; the sequence is MEGSEEHGETSKAPLSRGVSKGVS. Residues 25-45 traverse the membrane as a helical segment; that stretch reads ILDVILRFVAIIGTLASAIAM. At 46 to 72 the chain is on the extracellular side; it reads GTTNQTLPFFTQFIRFKAQYSDLPTLT. Residue N49 is glycosylated (N-linked (GlcNAc...) asparagine). Residues 73-93 traverse the membrane as a helical segment; sequence FFVVANSIVSAYLILSLPLSI. At 94 to 105 the chain is on the cytoplasmic side; sequence VHVIRSRAKYSR. A helical transmembrane segment spans residues 106–126; it reads LILIFFDAAMLALVTAGASAA. Residues 127-159 are Extracellular-facing; it reads AAIVYLAHKGNARANWLAICQQFDSFCERISGS. Residues 160–180 traverse the membrane as a helical segment; that stretch reads LIGSFAAMVVLVLLIFLSAIA. The Cytoplasmic segment spans residues 181–184; it reads LARR.

Belongs to the Casparian strip membrane proteins (CASP) family. Homodimer and heterodimers.

Its subcellular location is the cell membrane. Regulates membrane-cell wall junctions and localized cell wall deposition. Required for establishment of the Casparian strip membrane domain (CSD) and the subsequent formation of Casparian strips, a cell wall modification of the root endodermis that determines an apoplastic barrier between the intraorganismal apoplasm and the extraorganismal apoplasm and prevents lateral diffusion. The protein is Casparian strip membrane protein 3 of Oryza sativa subsp. indica (Rice).